A 104-amino-acid chain; its full sequence is Large ribosomal subunit protein eL31 (104 aa).

This sequence belongs to the eukaryotic ribosomal protein eL31 family.

The chain is Large ribosomal subunit protein eL31 (rpl31e) from Aeropyrum pernix (strain ATCC 700893 / DSM 11879 / JCM 9820 / NBRC 100138 / K1).